The primary structure comprises 955 residues: MEDSSTDTEKEEEEEKDEKDQEPIYAIVPTINIQDERFVDLSETPAFIFLHELHAMGKLPGTRMAALKAKYTLLHDAVMSTQESEVQLLQNAKRFTEQIQQQQFHLQQADNFPEAFSTEVSKMREQLLKYQNEYNAVKEREFHNQYRLNSLKEEKIIIVKEFEKITKPGEMEKKMKILRESTEELRKEIMQKKLEIKNLREDLASKQKQLLKEQKELEELLGHQVVLKDEVAHHQTIPVQIGKEIEKITRKKVEMEKKKIVLEQEVKTLNDSLKKVENKVSAIVDEKENVIKEVEGKRALLEIKEREHNQLVKLLELARENEATSLTERGILDLNLRNSLIDKQNYHDELSRKQREKERDFRNLRKMELLLKVSWDALRQTQALHQRLLLEMEAIPKDDSTLSERRRELHKEVEVAKRNLAQQKIISEMESKLVEQQLAEENKLLKEQENMKELVVNLLRMTQIKIDEKEQKSKDFLKAQQKYTNIVKEMKAKDLEIRIHKKKKCEIYRRLREFAKLYDTIRNERNKFVNLLHKAHQKVNEIKERHKMSLNELEILRNSAVSQERKLQNSMLKHANNVTIRESMQNDVRKIVSKLQEMKEKKEAQLNNIDRLANTITMIEEEMVQLRKRYEKAVQHRNESGVQLIEREEEICIFYEKINIQEKMKLNGEIEIHLLEEKIQFLKMKIAEKQRQICVTQKLLPAKRSLDADLAVLQIQFSQCTDRIKDLEKQFVKPDGENRARFLPGKDLTEKEMIQKLDKLELQLAKKEEKLLEKDFIYEQVSRLTDRLCSKTQGCKQDTLLLAKKMNGYQRRIKNATEKMMALVAELSMKQALTIELQKEVREKEDFIFTCNSRIEKGLPLNKEIEKEWLKVLRDEEMHALAIAEKSQEFLEADNRQLPNGVYTTAEQRPNAYIPEADATLPLPKPYGALAPFKPSEPGANMRHIRKPVIKPVEI.

Residues 1–17 (MEDSSTDTEKEEEEEKD) show a composition bias toward acidic residues. Residues 1 to 22 (MEDSSTDTEKEEEEEKDEKDQE) form a disordered region. 5 coiled-coil regions span residues 114–141 (EAFSTEVSKMREQLLKYQNEYNAVKERE), 169–321 (GEME…AREN), 400–461 (STLS…LLRM), 534–640 (KAHQ…RNES), and 667–832 (NGEI…MKQA).

In terms of assembly, interacts with CCDC38 and CCDC42. Interacts with intraflagellar transport proteins IFT20 and IFT88. As to quaternary structure, (Microbial infection) Interacts with Chlamydia trachomatis incM/YT288. In host cells infected with C.trachomatis incM, CCDC146 is recruited to the periphery of the pathogen-containing vacuole but recruitment is not dependent on incM. In terms of tissue distribution, widely expressed.

It localises to the cytoplasm. The protein localises to the cytoskeleton. It is found in the microtubule organizing center. Its subcellular location is the centrosome. The protein resides in the centriole. It localises to the flagellum axoneme. The protein localises to the cilium basal body. It is found in the midbody. Essential for sperm flagellum biogenesis and male fertility. This is Coiled-coil domain-containing protein 146 (CCDC146) from Homo sapiens (Human).